The chain runs to 313 residues: Ribosomal protein L11 methyltransferase (313 aa).

4 residues coordinate S-adenosyl-L-methionine: T164, G185, D207, and N249.

It belongs to the methyltransferase superfamily. PrmA family.

Its subcellular location is the cytoplasm. It catalyses the reaction L-lysyl-[protein] + 3 S-adenosyl-L-methionine = N(6),N(6),N(6)-trimethyl-L-lysyl-[protein] + 3 S-adenosyl-L-homocysteine + 3 H(+). Its function is as follows. Methylates ribosomal protein L11. The polypeptide is Ribosomal protein L11 methyltransferase (Clostridium perfringens (strain ATCC 13124 / DSM 756 / JCM 1290 / NCIMB 6125 / NCTC 8237 / Type A)).